The following is a 476-amino-acid chain: Argininosuccinate lyase (476 aa).

It belongs to the lyase 1 family. Argininosuccinate lyase subfamily.

It is found in the cytoplasm. The catalysed reaction is 2-(N(omega)-L-arginino)succinate = fumarate + L-arginine. It participates in amino-acid biosynthesis; L-arginine biosynthesis; L-arginine from L-ornithine and carbamoyl phosphate: step 3/3. This Leptothrix cholodnii (strain ATCC 51168 / LMG 8142 / SP-6) (Leptothrix discophora (strain SP-6)) protein is Argininosuccinate lyase.